The chain runs to 192 residues: UPF0301 protein BTH_I1462 (192 aa).

This sequence belongs to the UPF0301 (AlgH) family.

The protein is UPF0301 protein BTH_I1462 of Burkholderia thailandensis (strain ATCC 700388 / DSM 13276 / CCUG 48851 / CIP 106301 / E264).